The chain runs to 369 residues: NADH-quinone oxidoreductase subunit H (369 aa).

The next 8 membrane-spanning stretches (helical) occupy residues Val-20–Val-40, Ile-88–Ile-108, Ile-133–Gly-153, Ile-179–Val-199, Met-205–Leu-225, Ile-267–Ile-287, Ile-293–Ile-313, and Leu-328–Leu-348.

It belongs to the complex I subunit 1 family. In terms of assembly, NDH-1 is composed of 14 different subunits. Subunits NuoA, H, J, K, L, M, N constitute the membrane sector of the complex.

Its subcellular location is the cell inner membrane. The enzyme catalyses a quinone + NADH + 5 H(+)(in) = a quinol + NAD(+) + 4 H(+)(out). Functionally, NDH-1 shuttles electrons from NADH, via FMN and iron-sulfur (Fe-S) centers, to quinones in the respiratory chain. The immediate electron acceptor for the enzyme in this species is believed to be ubiquinone. Couples the redox reaction to proton translocation (for every two electrons transferred, four hydrogen ions are translocated across the cytoplasmic membrane), and thus conserves the redox energy in a proton gradient. This subunit may bind ubiquinone. The chain is NADH-quinone oxidoreductase subunit H from Ehrlichia canis (strain Jake).